The sequence spans 103 residues: Small ribosomal subunit protein uS10 (103 aa).

This sequence belongs to the universal ribosomal protein uS10 family. As to quaternary structure, part of the 30S ribosomal subunit.

In terms of biological role, involved in the binding of tRNA to the ribosomes. The polypeptide is Small ribosomal subunit protein uS10 (Psychrobacter sp. (strain PRwf-1)).